The chain runs to 365 residues: Chorismate synthase (365 aa).

Arg46 is a binding site for NADP(+). FMN-binding positions include 123–125 (RSS), 241–242 (NG), Gly281, 296–300 (KPTPS), and Arg322.

It belongs to the chorismate synthase family. In terms of assembly, homotetramer. The cofactor is FMNH2.

It carries out the reaction 5-O-(1-carboxyvinyl)-3-phosphoshikimate = chorismate + phosphate. It functions in the pathway metabolic intermediate biosynthesis; chorismate biosynthesis; chorismate from D-erythrose 4-phosphate and phosphoenolpyruvate: step 7/7. Its function is as follows. Catalyzes the anti-1,4-elimination of the C-3 phosphate and the C-6 proR hydrogen from 5-enolpyruvylshikimate-3-phosphate (EPSP) to yield chorismate, which is the branch point compound that serves as the starting substrate for the three terminal pathways of aromatic amino acid biosynthesis. This reaction introduces a second double bond into the aromatic ring system. The polypeptide is Chorismate synthase (Helicobacter pylori (strain Shi470)).